The primary structure comprises 199 residues: Histone deacetylase complex subunit SAP25 (199 aa).

Composition is skewed to polar residues over residues 151-163 and 184-199; these read QMSQGEPRPSSSA and QGADLSLPQTPDTHCP. The disordered stretch occupies residues 151-199; the sequence is QMSQGEPRPSSSAVGPPDHTSDPPSPCGSPSSSQGADLSLPQTPDTHCP.

In terms of assembly, may be a component of the mSIN3A corepressor complex. Interacts with SIN3A. Interacts with HDAC2.

The protein localises to the nucleus. Its subcellular location is the cytoplasm. Its function is as follows. Involved in the transcriptional repression mediated by the mSIN3A but not the N-CoR corepressor complex. This is Histone deacetylase complex subunit SAP25 (SAP25) from Homo sapiens (Human).